We begin with the raw amino-acid sequence, 29 residues long: NADH dehydrogenase [ubiquinone] 1 beta subcomplex subunit 10 (29 aa).

Residues 1 to 29 form a disordered region; it reads GRKKGVQFDEGAPDDFDPNNPYKKDVAFL.

Belongs to the complex I NDUFB10 subunit family. In terms of assembly, complex I is composed of about 45 different subunits.

The protein localises to the mitochondrion inner membrane. Functionally, accessory subunit of the mitochondrial membrane respiratory chain NADH dehydrogenase (Complex I), that is believed not to be involved in catalysis. Complex I functions in the transfer of electrons from NADH to the respiratory chain. The immediate electron acceptor for the enzyme is believed to be ubiquinone. The sequence is that of NADH dehydrogenase [ubiquinone] 1 beta subcomplex subunit 10 from Solanum tuberosum (Potato).